Consider the following 320-residue polypeptide: tRNA(Ile)-lysidine synthase, chloroplastic (320 aa).

31–36 (SGGKDS) lines the ATP pocket.

It belongs to the tRNA(Ile)-lysidine synthase family.

It localises to the plastid. The protein localises to the chloroplast. It catalyses the reaction cytidine(34) in tRNA(Ile2) + L-lysine + ATP = lysidine(34) in tRNA(Ile2) + AMP + diphosphate + H(+). In terms of biological role, ligates lysine onto the cytidine present at position 34 of the AUA codon-specific tRNA(Ile) that contains the anticodon CAU, in an ATP-dependent manner. Cytidine is converted to lysidine, thus changing the amino acid specificity of the tRNA from methionine to isoleucine. This Gracilaria tenuistipitata var. liui (Red alga) protein is tRNA(Ile)-lysidine synthase, chloroplastic.